The chain runs to 104 residues: Pyrimidine/purine nucleoside phosphorylase (104 aa).

Belongs to the nucleoside phosphorylase PpnP family.

It carries out the reaction a purine D-ribonucleoside + phosphate = a purine nucleobase + alpha-D-ribose 1-phosphate. The enzyme catalyses adenosine + phosphate = alpha-D-ribose 1-phosphate + adenine. It catalyses the reaction cytidine + phosphate = cytosine + alpha-D-ribose 1-phosphate. The catalysed reaction is guanosine + phosphate = alpha-D-ribose 1-phosphate + guanine. It carries out the reaction inosine + phosphate = alpha-D-ribose 1-phosphate + hypoxanthine. The enzyme catalyses thymidine + phosphate = 2-deoxy-alpha-D-ribose 1-phosphate + thymine. It catalyses the reaction uridine + phosphate = alpha-D-ribose 1-phosphate + uracil. The catalysed reaction is xanthosine + phosphate = alpha-D-ribose 1-phosphate + xanthine. Its function is as follows. Catalyzes the phosphorolysis of diverse nucleosides, yielding D-ribose 1-phosphate and the respective free bases. Can use uridine, adenosine, guanosine, cytidine, thymidine, inosine and xanthosine as substrates. Also catalyzes the reverse reactions. In Thiobacillus denitrificans (strain ATCC 25259 / T1), this protein is Pyrimidine/purine nucleoside phosphorylase.